The primary structure comprises 342 residues: Anthranilate phosphoribosyltransferase (342 aa).

Residues Gly79, 82-83 (GD), Thr87, 89-92 (NVST), 107-115 (KHGNRAATS), and Ser119 contribute to the 5-phospho-alpha-D-ribose 1-diphosphate site. Anthranilate is bound at residue Gly79. Position 91 (Ser91) interacts with Mg(2+). Asn110 contributes to the anthranilate binding site. Arg165 is a binding site for anthranilate. 2 residues coordinate Mg(2+): Asp224 and Glu225.

Belongs to the anthranilate phosphoribosyltransferase family. As to quaternary structure, homodimer. The cofactor is Mg(2+).

It carries out the reaction N-(5-phospho-beta-D-ribosyl)anthranilate + diphosphate = 5-phospho-alpha-D-ribose 1-diphosphate + anthranilate. The protein operates within amino-acid biosynthesis; L-tryptophan biosynthesis; L-tryptophan from chorismate: step 2/5. Functionally, catalyzes the transfer of the phosphoribosyl group of 5-phosphorylribose-1-pyrophosphate (PRPP) to anthranilate to yield N-(5'-phosphoribosyl)-anthranilate (PRA). This Rubrobacter xylanophilus (strain DSM 9941 / JCM 11954 / NBRC 16129 / PRD-1) protein is Anthranilate phosphoribosyltransferase.